Reading from the N-terminus, the 98-residue chain is C-X-C motif chemokine 10 (98 aa).

A signal peptide spans 1–21 (MNQSAVLIFCLIFLTLNGTQG). At Arg26 the chain carries Citrulline. 2 disulfide bridges follow: Cys30-Cys57 and Cys32-Cys74.

It belongs to the intercrine alpha (chemokine CxC) family. In terms of assembly, monomer, dimer, and tetramer. Interacts with CXCR3 (via N-terminus).

It localises to the secreted. In terms of biological role, pro-inflammatory cytokine that is involved in a wide variety of processes such as chemotaxis, differentiation, and activation of peripheral immune cells, regulation of cell growth, apoptosis and modulation of angiostatic effects. Plays thereby an important role during viral infections by stimulating the activation and migration of immune cells to the infected sites. Mechanistically, binding of CXCL10 to the CXCR3 receptor activates G protein-mediated signaling and results in downstream activation of phospholipase C-dependent pathway, an increase in intracellular calcium production and actin reorganization. In turn, recruitment of activated Th1 lymphocytes occurs at sites of inflammation. Activation of the CXCL10/CXCR3 axis also plays an important role in neurons in response to brain injury for activating microglia, the resident macrophage population of the central nervous system, and directing them to the lesion site. This recruitment is an essential element for neuronal reorganization. This is C-X-C motif chemokine 10 (CXCL10) from Canis lupus familiaris (Dog).